Reading from the N-terminus, the 191-residue chain is Imidazoleglycerol-phosphate dehydratase (191 aa).

Belongs to the imidazoleglycerol-phosphate dehydratase family.

The protein localises to the cytoplasm. The enzyme catalyses D-erythro-1-(imidazol-4-yl)glycerol 3-phosphate = 3-(imidazol-4-yl)-2-oxopropyl phosphate + H2O. Its pathway is amino-acid biosynthesis; L-histidine biosynthesis; L-histidine from 5-phospho-alpha-D-ribose 1-diphosphate: step 6/9. This is Imidazoleglycerol-phosphate dehydratase from Methanococcoides burtonii (strain DSM 6242 / NBRC 107633 / OCM 468 / ACE-M).